A 205-amino-acid chain; its full sequence is MTSAVGNTGMAAPQRVAALNRPNMVSVGTIVFLSQELMFFAGLFAMYFVSRANGLANGSWGEQTDHLNVPYALLITVILVSSSVTCQFGVFAAERGDVYGLRKWFLVTIILGSIFVIGQGYEYITLVGHGLTIQSSVYGSAFFITTGFHALHVIAGVMAFVVVLMRIHKSKFTPAQATAAMVVSYYWHFVDVVWIGLFITIYFIQ.

5 helical membrane-spanning segments follow: residues 29-49 (TIVF…MYFV), 72-92 (ALLI…GVFA), 104-124 (WFLV…YEYI), 142-162 (FFIT…AFVV), and 184-204 (SYYW…IYFI).

In terms of assembly, associates with subunits I, II and IV to form cytochrome c oxidase. The 4 subunit cytochrome c oxidase forms a supercomplex with the menaquinol-cytochrome c reductase complex (cytochrome bc1).

It is found in the cell membrane. It carries out the reaction 4 Fe(II)-[cytochrome c] + O2 + 8 H(+)(in) = 4 Fe(III)-[cytochrome c] + 2 H2O + 4 H(+)(out). The polypeptide is Cytochrome c oxidase subunit 3 (ctaE) (Corynebacterium glutamicum (strain ATCC 13032 / DSM 20300 / JCM 1318 / BCRC 11384 / CCUG 27702 / LMG 3730 / NBRC 12168 / NCIMB 10025 / NRRL B-2784 / 534)).